The sequence spans 853 residues: MAPPLNSTTSNLIKTESIFDLSERKFKVKGFPLFHDVPENVSFRSFSSICKPSESNAPPSLLQKVLAYSHKGGFFGFSHETPSDRLMNSIGSFNGKDFLSIFRFKTWWSTQWIGKSGSDLQMETQWILIEVPETKSYVVIIPIIEKCFRSALFPGFNDHVKIIAESGSTKVKESTFNSIAYVHFSENPYDLMKEAYSAIRVHLNSFRLLEEKTIPNLVDKFGWCTWDAFYLTVNPIGIFHGLDDFSKGGVEPRFVIIDDGWQSISFDGYDPNEDAKNLVLGGEQMSGRLHRFDECYKFRKYESGLLLGPNSPPYDPNNFTDLILKGIEHEKLRKKREEAISSKSSDLAEIESKIKKVVKEIDDLFGGEQFSSGEKSEMKSEYGLKAFTKDLRTKFKGLDDVYVWHALCGAWGGVRPETTHLDTKIVPCKLSPGLDGTMEDLAVVEISKASLGLVHPSQANELYDSMHSYLAESGITGVKVDVIHSLEYVCDEYGGRVDLAKVYYEGLTKSIVKNFNGNGMIASMQHCNDFFFLGTKQISMGRVGDDFWFQDPNGDPMGSFWLQGVHMIHCSYNSLWMGQMIQPDWDMFQSDHVCAKFHAGSRAICGGPIYVSDNVGSHDFDLIKKLVFPDGTIPKCIYFPLPTRDCLFKNPLFDHTTVLKIWNFNKYGGVIGAFNCQGAGWDPIMQKFRGFPECYKPIPGTVHVTEVEWDQKEETSHLGKAEEYVVYLNQAEELSLMTLKSEPIQFTIQPSTFELYSFVPVTKLCGGIKFAPIGLTNMFNSGGTVIDLEYVGNGAKIKVKGGGSFLAYSSESPKKFQLNGCEVDFEWLGDGKLCVNVPWIEEACGVSDMEIFF.

Residues 1–11 (MAPPLNSTTSN) constitute a propeptide that is removed on maturation.

The protein belongs to the glycosyl hydrolases 36 family.

Its subcellular location is the cytoplasm. It carries out the reaction alpha-D-galactosyl-(1-&gt;3)-1D-myo-inositol + raffinose = stachyose + myo-inositol. It participates in glycan metabolism; stachyose biosynthesis; stachyose from raffinose: step 1/1. Functionally, catalyzes stachyose synthesis by transfer of a galactosyl moiety from galactinol to raffinose. Also catalyzes verbascose synthesis by galactosyl transfer from galactinol to stachyose or from one stachyose molecule to another. Oligosaccharides of the raffinose family play a protective role in maturation drying of seeds. They may act as cryoprotectants in frost-hardy plants. This is Stachyose synthase (STS1) from Pisum sativum (Garden pea).